The sequence spans 125 residues: Snaclec botrocetin subunit beta (125 aa).

Cystine bridges form between C2–C13, C30–C121, and C98–C113. The C-type lectin domain maps to 9–122 (YEGHCYRFFK…CTRFKNFVCE (114 aa)).

It belongs to the snaclec family. Heterodimer of subunits alpha and beta; disulfide-linked. Botrocetin and vWF form a soluble complex. As to expression, expressed by the venom gland.

The protein localises to the secreted. In terms of biological role, snaclec that binds to von Willebrand factor (VWF) and induces its interaction with GPIbalpha (GP1BA) (via the vWF A1 domain), resulting in platelet aggregation. The polypeptide is Snaclec botrocetin subunit beta (Bothrops jararaca (Jararaca)).